The sequence spans 101 residues: Small ribosomal subunit protein bS18c (101 aa).

Over residues 1–19 (MNKSKRPFTKSKRSFRRRL) the composition is skewed to basic residues. The interval 1-23 (MNKSKRPFTKSKRSFRRRLPPIQ) is disordered.

It belongs to the bacterial ribosomal protein bS18 family. As to quaternary structure, part of the 30S ribosomal subunit.

It localises to the plastid. Its subcellular location is the chloroplast. The polypeptide is Small ribosomal subunit protein bS18c (Lobularia maritima (Sweet alyssum)).